The chain runs to 695 residues: Pentatricopeptide repeat-containing protein 1, mitochondrial (695 aa).

PPR repeat units lie at residues 133–169 (TQYWYFFQCKRLIKEGKLAEALDLFERQMLKEERLQP), 170–204 (LECNYTVLIGGCGRVGYLKKAFRLFNDMKKRDLEP), 205–243 (SDATYTALFNVCAESPWKDSALQSALKLRQQLQARNFQL), 244–278 (NLKTYHALLKVAAKCADLRLCLDVFKEIIQRGHAV), 279–315 (TEETFCFLLVGCIQDKKTGFRQAMQVWRQMLSLGIKP), and 316–352 (SRHGYNLLLEAARDCGLGDPEVASRLLLTSQEETILL). Positions 391 to 416 (QKLEGPPALPEARVTSRTQPEVETTA) are disordered. 4 PPR repeats span residues 470–485 (EGFLGKMTEHGLQPDI), 517–551 (DVTFFNTLIRKKSKLGDLEGAKALLPILAKKGIVP), 552–583 (NLRTFCNLAIGCHRPRDGMQLLADMKKSQVSP), and 584–618 (NIHIYSTLINAALKKLDYTYLISILKDMRQNSVPV). The tract at residues 672 to 695 (WQEFQNKPVGDQDTTDKAGGLRDG) is disordered. Residues 685–695 (TTDKAGGLRDG) are compositionally biased toward basic and acidic residues.

The protein belongs to the PTCD1 family. Associates with mitochondrial leucine tRNAs. Interacts with ELAC2.

It localises to the mitochondrion. Its subcellular location is the mitochondrion matrix. Functionally, mitochondrial protein implicated in negative regulation of leucine tRNA levels, as well as negative regulation of mitochondria-encoded proteins and COX activity. Also affects the 3'-processing of mitochondrial tRNAs. The protein is Pentatricopeptide repeat-containing protein 1, mitochondrial (Ptcd1) of Mus musculus (Mouse).